Reading from the N-terminus, the 735-residue chain is Photosystem I P700 chlorophyll a apoprotein A2 (735 aa).

The next 8 helical transmembrane spans lie at 46 to 69 (LFST…FHIA), 135 to 158 (LYQG…LHLQ), 175 to 199 (LNHH…HVAI), 273 to 291 (IAHH…GHMY), 333 to 356 (LHFQ…QHMY), 372 to 398 (AALY…IFFI), 420 to 442 (AIIS…LYVH), and 518 to 536 (FLVH…LILV). Residues cysteine 560 and cysteine 569 each contribute to the [4Fe-4S] cluster site. The next 2 membrane-spanning stretches (helical) occupy residues 576–597 (AFYL…YWHW) and 644–666 (LAVW…MFLI). Residues histidine 655, methionine 663, and tyrosine 671 each coordinate chlorophyll a. A phylloquinone-binding site is contributed by tryptophan 672. Residues 708 to 728 (VVGLAHFSVGYVLTYAAFLIA) form a helical membrane-spanning segment.

This sequence belongs to the PsaA/PsaB family. As to quaternary structure, the PsaA/B heterodimer binds the P700 chlorophyll special pair and subsequent electron acceptors. PSI consists of a core antenna complex that captures photons, and an electron transfer chain that converts photonic excitation into a charge separation. The cyanobacterial PSI reaction center is composed of one copy each of PsaA,B,C,D,E,F,I,J,K,L,M and X, and forms trimeric complexes. PSI electron transfer chain: 5 chlorophyll a, 1 chlorophyll a', 2 phylloquinones and 3 4Fe-4S clusters. PSI core antenna: 90 chlorophyll a, 22 carotenoids, 3 phospholipids and 1 galactolipid. P700 is a chlorophyll a/chlorophyll a' dimer, A0 is one or more chlorophyll a, A1 is one or both phylloquinones and FX is a shared 4Fe-4S iron-sulfur center. is required as a cofactor.

It localises to the cellular thylakoid membrane. It carries out the reaction reduced [plastocyanin] + hnu + oxidized [2Fe-2S]-[ferredoxin] = oxidized [plastocyanin] + reduced [2Fe-2S]-[ferredoxin]. Its function is as follows. PsaA and PsaB bind P700, the primary electron donor of photosystem I (PSI), as well as the electron acceptors A0, A1 and FX. PSI is a plastocyanin/cytochrome c6-ferredoxin oxidoreductase, converting photonic excitation into a charge separation, which transfers an electron from the donor P700 chlorophyll pair to the spectroscopically characterized acceptors A0, A1, FX, FA and FB in turn. Oxidized P700 is reduced on the lumenal side of the thylakoid membrane by plastocyanin or cytochrome c6. The sequence is that of Photosystem I P700 chlorophyll a apoprotein A2 from Synechococcus sp. (strain CC9902).